A 207-amino-acid chain; its full sequence is Putative 3-methyladenine DNA glycosylase (207 aa).

Belongs to the DNA glycosylase MPG family.

The sequence is that of Putative 3-methyladenine DNA glycosylase from Koribacter versatilis (strain Ellin345).